Reading from the N-terminus, the 132-residue chain is Pre-histone-like nucleoprotein (132 aa).

Residues 2-23 constitute a propeptide that is removed on maturation; that stretch reads AILISPSNNTGWGLGTHKLFGG. The Nuclear localization signal signature appears at 124-132; it reads RRKRRVRSK.

The protein belongs to the adenoviridae histone-like nucleoprotein family. As to quaternary structure, interacts with the core-capsid bridging protein; this interaction bridges the virus core to the capsid. Interacts with host NPM1; this interaction might play a role in placing the pre-histone-like nucleoprotein on the viral DNA or regulating viral gene expression. Interacts with host HMGB1; this interaction inhibits host immune response. Post-translationally, cleaved near the N-terminus by the viral protease during virion maturation to form the mature protein.

It localises to the virion. The protein localises to the host nucleus. It is found in the host nucleolus. Its function is as follows. Plays a role in the inhibition of host immune response within the nucleus. Interacts with cellular nucleosomes and immobilizes the host immune danger signal HMGB1 on chromatin. In turn, prevents HMGB1 release out of the cell and thus decreases inflammation. Also plays a role in the wrapping and condensation of the viral DNA. May also promote viral genome import into the nucleus. In Canine adenovirus serotype 1 (strain RI261) (CAdV-1), this protein is Pre-histone-like nucleoprotein.